The primary structure comprises 139 residues: MENKVINFKKIIDSRGSLVAIEENKNIPFSIKRVYYIFDTKGEEPRGFHAHKKLEQVLVCLNGSCRVILDDGNIIQEITLDSPAVGLYVGPAVWHEMHDFSSDCVMMVLASDYYDETDYIRQYDNFKKYIAKINLEKEG.

Catalysis depends on His49, which acts as the Proton acceptor.

Homodimer.

The catalysed reaction is dTDP-4-dehydro-6-deoxy-alpha-D-glucose = dTDP-3-dehydro-6-deoxy-alpha-D-galactose. In terms of biological role, mediates the isomerization of dTDP-6-deoxy-D-xylohex-4-ulose into dTDP-6-deoxy-D-xylohex-3-ulose in the biosynthesis of dTDP-3-acetamido-3,6-dideoxy-alpha-D-galactose, a glycan chain of the S-layer. The polypeptide is TDP-4-oxo-6-deoxy-alpha-D-glucose-3,4-oxoisomerase (fdtA) (Aneurinibacillus thermoaerophilus).